A 391-amino-acid chain; its full sequence is MNDSVFSKKRILLLGSGELGKELVIESKRLGLEVIAIDRYEKAPAMQVADYSKVIDMGDKNILKNSIKEFTPDFVVPEIEALSIEALKELEDEGFKIVPNARTVEITMNRDKIRELVSRDLKIKTANYDYIYKFEDLEKKADEIGFPLLLKPLMSSSGKGQSLVGSKNDLNQAWSQAQANSRGQVKGVIIEEFINFDFEFTLLTVRKNNGENIFCLPIGHLQSNGDYQCSWHPLEINQSLISEAKKMTTKILNNLNGSGLYGVEFFVKENEVIFSELSPRPHDTGMVTLVSQNINEFELHLRAFLNLPIPHINLIEPSATRVILSDQEHMNPIYEGLNEALEVENTKVLIFGKPISRKGRRMGVVLSSNSDINLARKNADEAARKIKVSSK.

N(1)-(5-phospho-beta-D-ribosyl)glycinamide is bound by residues 18–19 and glutamate 78; that span reads EL. ATP-binding positions include arginine 110, lysine 151, 156 to 161, 191 to 194, and glutamate 199; these read SSGKGQ and EEFI. The 191-residue stretch at 115–305 folds into the ATP-grasp domain; that stretch reads ELVSRDLKIK…EFELHLRAFL (191 aa). Residues glutamate 264 and glutamate 276 each coordinate Mg(2+). N(1)-(5-phospho-beta-D-ribosyl)glycinamide is bound by residues aspartate 283, lysine 353, and 360-361; that span reads RR.

The protein belongs to the PurK/PurT family. In terms of assembly, homodimer.

It carries out the reaction N(1)-(5-phospho-beta-D-ribosyl)glycinamide + formate + ATP = N(2)-formyl-N(1)-(5-phospho-beta-D-ribosyl)glycinamide + ADP + phosphate + H(+). It functions in the pathway purine metabolism; IMP biosynthesis via de novo pathway; N(2)-formyl-N(1)-(5-phospho-D-ribosyl)glycinamide from N(1)-(5-phospho-D-ribosyl)glycinamide (formate route): step 1/1. In terms of biological role, involved in the de novo purine biosynthesis. Catalyzes the transfer of formate to 5-phospho-ribosyl-glycinamide (GAR), producing 5-phospho-ribosyl-N-formylglycinamide (FGAR). Formate is provided by PurU via hydrolysis of 10-formyl-tetrahydrofolate. This is Formate-dependent phosphoribosylglycinamide formyltransferase from Prochlorococcus marinus (strain MIT 9312).